The chain runs to 165 residues: MKFLIEDNIKFMQQFSIYHTSNELFLKAILRLIEKCYYSNFKSVILTTDVHQQEMLNKNLWTYSRKQFIPHGSKFDPQPAKQPIYITDELQNPNNASVLVIISPTDIAKILQVKEYIKVFKRIIIITDLLENLKELIIKINKFTGQENKIDCFTQNPIGTWNKIA.

The protein belongs to the DNA polymerase III chi/HolC chain family. DNA polymerase III contains a core (composed of alpha, epsilon and theta chains) that associates with a tau subunit. This core dimerizes to form the POLIII' complex. PolIII' associates with the gamma complex (composed of gamma, delta, delta', psi and chi chains) and with the beta chain to form the complete DNA polymerase III complex. Interacts directly with the psi subunit (holD). The only subunit of the DNA polymerase III holoenzyme known to interact with single-stranded DNA binding protein (SSB).

It carries out the reaction DNA(n) + a 2'-deoxyribonucleoside 5'-triphosphate = DNA(n+1) + diphosphate. Its function is as follows. Part of the beta sliding clamp loading complex, which hydrolyzes ATP to load the beta clamp onto primed DNA to form the DNA replication pre-initiation complex. DNA polymerase III is a complex, multichain enzyme responsible for most of the replicative synthesis in bacteria. This DNA polymerase also exhibits 3' to 5' exonuclease activity. This Rickettsia prowazekii (strain Madrid E) protein is Probable DNA polymerase III subunit chi.